We begin with the raw amino-acid sequence, 463 residues long: Phosphoglucosamine mutase (463 aa).

Catalysis depends on Ser102, which acts as the Phosphoserine intermediate. 4 residues coordinate Mg(2+): Ser102, Asp240, Asp242, and Asp244. Position 102 is a phosphoserine (Ser102).

This sequence belongs to the phosphohexose mutase family. Mg(2+) serves as cofactor. Post-translationally, activated by phosphorylation.

The catalysed reaction is alpha-D-glucosamine 1-phosphate = D-glucosamine 6-phosphate. Catalyzes the conversion of glucosamine-6-phosphate to glucosamine-1-phosphate. The protein is Phosphoglucosamine mutase of Mycobacterium leprae (strain Br4923).